An 81-amino-acid polypeptide reads, in one-letter code: Cell division protein ZapB (81 aa).

Residues 5–81 are a coiled coil; sequence LEVFEKLESK…QALLGRMEEV (77 aa). The interval 43–64 is disordered; it reads VHSAQNGREELERENQQLREQQ. The segment covering 49-59 has biased composition (basic and acidic residues); sequence GREELERENQQ.

Belongs to the ZapB family. As to quaternary structure, homodimer. The ends of the coiled-coil dimer bind to each other, forming polymers. Interacts with FtsZ.

The protein resides in the cytoplasm. Its function is as follows. Non-essential, abundant cell division factor that is required for proper Z-ring formation. It is recruited early to the divisome by direct interaction with FtsZ, stimulating Z-ring assembly and thereby promoting cell division earlier in the cell cycle. Its recruitment to the Z-ring requires functional FtsA or ZipA. The protein is Cell division protein ZapB of Enterobacter sp. (strain 638).